A 245-amino-acid polypeptide reads, in one-letter code: Probable phosphatase Teth514_1060 (245 aa).

Zn(2+) contacts are provided by His8, His10, His16, His41, Glu74, His102, His133, Asp194, and His196.

Belongs to the PHP family. It depends on Zn(2+) as a cofactor.

This chain is Probable phosphatase Teth514_1060, found in Thermoanaerobacter sp. (strain X514).